Consider the following 883-residue polypeptide: Alanine--tRNA ligase (883 aa).

Zn(2+)-binding residues include His-565, His-569, Cys-675, and His-679.

This sequence belongs to the class-II aminoacyl-tRNA synthetase family. Requires Zn(2+) as cofactor.

It localises to the cytoplasm. The enzyme catalyses tRNA(Ala) + L-alanine + ATP = L-alanyl-tRNA(Ala) + AMP + diphosphate. Its function is as follows. Catalyzes the attachment of alanine to tRNA(Ala) in a two-step reaction: alanine is first activated by ATP to form Ala-AMP and then transferred to the acceptor end of tRNA(Ala). Also edits incorrectly charged Ser-tRNA(Ala) and Gly-tRNA(Ala) via its editing domain. The polypeptide is Alanine--tRNA ligase (Rhodospirillum rubrum (strain ATCC 11170 / ATH 1.1.1 / DSM 467 / LMG 4362 / NCIMB 8255 / S1)).